The primary structure comprises 662 residues: Glycogen debranching enzyme (662 aa).

Asp-338 acts as the Nucleophile in catalysis. Glu-373 serves as the catalytic Proton donor.

Belongs to the glycosyl hydrolase 13 family.

It carries out the reaction Hydrolysis of (1-&gt;6)-alpha-D-glucosidic linkages to branches with degrees of polymerization of three or four glucose residues in limit dextrin.. It functions in the pathway glycan degradation; glycogen degradation. Removes maltotriose and maltotetraose chains that are attached by 1,6-alpha-linkage to the limit dextrin main chain, generating a debranched limit dextrin. The polypeptide is Glycogen debranching enzyme (Yersinia pestis).